A 156-amino-acid polypeptide reads, in one-letter code: Cellulose synthase operon protein D (156 aa).

It functions in the pathway glycan metabolism; bacterial cellulose biosynthesis. Functionally, may have a major role in the perfection of crystallization, involved either in the pore structure itself or in the organization of the pores within the linear array of terminal synthesizing complexes (TCs). In Komagataeibacter sucrofermentans (strain ATCC 700178 / DSM 15973 / CECT 7291 / JCM 9730 / LMG 18788 / BPR 2001) (Acetobacter xylinus subsp. sucrofermentans), this protein is Cellulose synthase operon protein D.